The following is a 563-amino-acid chain: Tripeptidyl-peptidase 1 (563 aa).

A signal peptide spans 1–19 (MGPRSGLLGLFALFVAGKC). A propeptide spans 20–195 (SYSPEPDQQR…PEPQVPGTVG (176 aa)) (removed in mature form). Cys111 and Cys122 are disulfide-bonded. In terms of domain architecture, Peptidase S53 spans 199–563 (GVTPSVIRKR…PALLKTLMNP (365 aa)). Asn210 and Asn222 each carry an N-linked (GlcNAc...) asparagine glycan. Active-site charge relay system residues include Glu272 and Asp276. 3 N-linked (GlcNAc...) asparagine glycosylation sites follow: Asn286, Asn313, and Asn443. 2 cysteine pairs are disulfide-bonded: Cys365-Cys526 and Cys522-Cys537. The active-site Charge relay system is Ser475. Positions 517 and 518 each coordinate Ca(2+). Ca(2+) contacts are provided by Gly539, Gly541, and Asp543.

As to quaternary structure, monomer. Interacts with CLN5. Interacts with CLN3. It depends on Ca(2+) as a cofactor. Activated by autocatalytic proteolytical processing upon acidification. N-glycosylation is required for processing and activity.

Its subcellular location is the lysosome. The protein localises to the melanosome. It carries out the reaction Release of an N-terminal tripeptide from a polypeptide, but also has endopeptidase activity.. Functionally, lysosomal serine protease with tripeptidyl-peptidase I activity. May act as a non-specific lysosomal peptidase which generates tripeptides from the breakdown products produced by lysosomal proteinases. Requires substrates with an unsubstituted N-terminus. This Bos taurus (Bovine) protein is Tripeptidyl-peptidase 1 (TPP1).